The sequence spans 441 residues: C-terminal-binding protein 1 (441 aa).

The tract at residues 1–70 (MGSSHLLNKG…EIHEKVLNEA (70 aa)) is interaction with GLIS2 1. NAD(+) contacts are provided by residues serine 100, 180–185 (IGLGRV), aspartate 204, 237–243 (CGLNEHN), 264–266 (TAR), and aspartate 290. The active site involves arginine 266. Residues 288-360 (ALDVHESEPF…VNKDHLTAAT (73 aa)) are interaction with GLIS2 2. The active site involves glutamate 295. Position 300 is a phosphoserine (serine 300). Catalysis depends on histidine 315, which acts as the Proton donor. 315-318 (HAAW) is a binding site for NAD(+). The tract at residues 409–441 (SHGLPPVAHPPHAPSPGQTVKPEADRDHTSDQL) is disordered. At serine 423 the chain carries Phosphoserine. Residue lysine 429 forms a Glycyl lysine isopeptide (Lys-Gly) (interchain with G-Cter in SUMO) linkage. Residues 430-441 (PEADRDHTSDQL) show a composition bias toward basic and acidic residues.

Belongs to the D-isomer specific 2-hydroxyacid dehydrogenase family. In terms of assembly, homo- or heterodimer. Heterodimer with CTBP2. Interacts with ELK3 (via its PXDLS motif). Interacts with RBBP8 (via its PXDLS motif). Interacts with PNN, MECOM and ZFHX1B. Interacts with ZNF366 (via PXDLS motif). Interaction with SATB1 (non-acetylated form); the interaction stabilizes its attachment to DNA and promotes transcription repression. Interacts with PRDM16; the interaction represses white adipose tissue (WAT)-specific genes expression. Interacts with GLIS2, HIPK2, FOXP1, FOXP2, HDAC4, HDAC5, HDAC9, NRIP1, WIZ and ZNF217. Interacts with BCL6; the interaction is required for BCL6 transcriptional autoinhibition and inhibition of some BCL6 target genes. Interacts with IKZF4. Interacts with MCRIP1 (unphosphorylated form, via the PXDLS motif); competitively inhibiting CTBP-ZEB1 interaction. Interacts with Bassoon/BSN; this interaction targets and anchors CTBP1 to presynapses. Interacts with SIMC1. The cofactor is NAD(+). Post-translationally, ADP-ribosylated; when cells are exposed to brefeldin A. In terms of processing, the level of phosphorylation appears to be regulated during the cell cycle. Phosphorylation by HIPK2 on Ser-423 induces proteasomal degradation. Sumoylation on Lys-429 is promoted by the E3 SUMO-protein ligase CBX4. Expressed in a wide range of adult tissues.

Its subcellular location is the cytoplasm. It localises to the nucleus. In terms of biological role, corepressor targeting diverse transcription regulators such as GLIS2 or BCL6. Has dehydrogenase activity. Involved in controlling the equilibrium between tubular and stacked structures in the Golgi complex. Functions in brown adipose tissue (BAT) differentiation. The polypeptide is C-terminal-binding protein 1 (Ctbp1) (Mus musculus (Mouse)).